The primary structure comprises 525 residues: MNDLKKSPLLILDFGSQYTQLIARRVREMGVYCEIYPYHINHEQFKKLNPCGVILSGGPSTVTHDANPRAPQWLFESDLPLLGICYGMQTMAVQLGGQVHSSALREFGYAELRLHGHSQLLSNIEDRTAVDGSALLDVWMSHGDKVTELPPGFKVICETRNAPIAGMADESRQMYGLQFHPEVTHTLQGLRILQRFVVDICKAPTEWTPEHIIDEAINKIREQVGTEKVLLGLSGGVDSSVVAALLHRAIGEQLVCVFVDTGLLRLNEAEQVLSMFGRHMGIRIIAVNAEDKFLTALKGVTCPEEKRKIIGRTFIEVFDEEAQKLTDIKWLAQGTIYPDVIESAATSTNDAAVVIKSHHNVGGLPDTLNLKLLEPIRELFKDEVRQVGLELGLPHDMVYRHPFPGPGLGVRILAEVKKEYADILRKADAIFIEELHNAQLYHKISQAFAVFLPVKSVGVMGDGRRYDYVICLRAVETVDFMTAHWSQLPWDFLGKVSNRIINEVEGVSRVTYDISGKPPATIEWE.

One can recognise a Glutamine amidotransferase type-1 domain in the interval 8–206; the sequence is PLLILDFGSQ…VVDICKAPTE (199 aa). The active-site Nucleophile is the cysteine 85. Catalysis depends on residues histidine 180 and glutamate 182. The GMPS ATP-PPase domain maps to 207–400; it reads WTPEHIIDEA…LGLPHDMVYR (194 aa). Residue 234–240 participates in ATP binding; sequence SGGVDSS.

Homodimer.

It carries out the reaction XMP + L-glutamine + ATP + H2O = GMP + L-glutamate + AMP + diphosphate + 2 H(+). Its pathway is purine metabolism; GMP biosynthesis; GMP from XMP (L-Gln route): step 1/1. Its function is as follows. Catalyzes the synthesis of GMP from XMP. The protein is GMP synthase [glutamine-hydrolyzing] of Legionella pneumophila (strain Corby).